The chain runs to 756 residues: Putative DNA ligase 052L (756 aa).

The active-site N6-AMP-lysine intermediate is the Lys-103. A compositionally biased stretch (low complexity) spans 610-620 (PSAAGSASPCR). The tract at residues 610–630 (PSAAGSASPCRPTKRRDDWFD) is disordered. In terms of domain architecture, BRCT spans 648–742 (KKRPPMQGYV…LKRQRKCRAR (95 aa)).

The protein belongs to the NAD-dependent DNA ligase family.

It catalyses the reaction NAD(+) + (deoxyribonucleotide)n-3'-hydroxyl + 5'-phospho-(deoxyribonucleotide)m = (deoxyribonucleotide)n+m + AMP + beta-nicotinamide D-nucleotide.. Functionally, catalyzes the formation of phosphodiester linkages between 5'-phosphoryl and 3'-hydroxyl groups in double-stranded DNA using NAD as a coenzyme and as the energy source for the reaction. The chain is Putative DNA ligase 052L from Invertebrate iridescent virus 3 (IIV-3).